The sequence spans 288 residues: MASLRDIKSRITSTKKSSQITKAMQMVSAAKLNRAENNAKSFVPYMEKIQEVVAAIATGTSAKHPMLLSRPVKKTGYLVITSDRGLAGPFNSSILRAAYQTIQSRHQSADEYAVIVIGKIGRDFFKKRGIPVISEVTGLGDEVAFADIKELASSTVQMFSDEAFDELYMFYNHFVSAISQEVTEKKLLPLTDISAAATPNKRSASYEFEPSEEEILEVLLPQYAESLIFGALLDSKASEHAARMTAMKSATDNAKELIDSLTLSYNRARQAAITQEITEIVGGAAALE.

Belongs to the ATPase gamma chain family. F-type ATPases have 2 components, CF(1) - the catalytic core - and CF(0) - the membrane proton channel. CF(1) has five subunits: alpha(3), beta(3), gamma(1), delta(1), epsilon(1). CF(0) has three main subunits: a, b and c.

The protein localises to the cell membrane. Its function is as follows. Produces ATP from ADP in the presence of a proton gradient across the membrane. The gamma chain is believed to be important in regulating ATPase activity and the flow of protons through the CF(0) complex. This is ATP synthase gamma chain from Bacillus pumilus (strain SAFR-032).